The chain runs to 382 residues: Small ribosomal subunit protein mS35 (382 aa).

The segment covering 363-375 (GRGGKALPGGKGG) has biased composition (gly residues). The segment at 363 to 382 (GRGGKALPGGKGGKMQRSKR) is disordered.

The protein belongs to the mitochondrion-specific ribosomal protein mS35 family. As to quaternary structure, component of the mitochondrial small ribosomal subunit (mt-SSU). Mature N.crassa 74S mitochondrial ribosomes consist of a small (37S) and a large (54S) subunit. The 37S small subunit contains a 16S ribosomal RNA (16S mt-rRNA) and 32 different proteins. The 54S large subunit contains a 23S rRNA (23S mt-rRNA) and 42 different proteins.

The protein resides in the mitochondrion. Component of the mitochondrial ribosome (mitoribosome), a dedicated translation machinery responsible for the synthesis of mitochondrial genome-encoded proteins, including at least some of the essential transmembrane subunits of the mitochondrial respiratory chain. The mitoribosomes are attached to the mitochondrial inner membrane and translation products are cotranslationally integrated into the membrane. This Neurospora crassa (strain ATCC 24698 / 74-OR23-1A / CBS 708.71 / DSM 1257 / FGSC 987) protein is Small ribosomal subunit protein mS35 (rsm24).